The following is a 215-amino-acid chain: 3-isopropylmalate dehydratase small subunit (215 aa).

The protein belongs to the LeuD family. LeuD type 1 subfamily. Heterodimer of LeuC and LeuD.

The catalysed reaction is (2R,3S)-3-isopropylmalate = (2S)-2-isopropylmalate. The protein operates within amino-acid biosynthesis; L-leucine biosynthesis; L-leucine from 3-methyl-2-oxobutanoate: step 2/4. Functionally, catalyzes the isomerization between 2-isopropylmalate and 3-isopropylmalate, via the formation of 2-isopropylmaleate. The protein is 3-isopropylmalate dehydratase small subunit of Polynucleobacter asymbioticus (strain DSM 18221 / CIP 109841 / QLW-P1DMWA-1) (Polynucleobacter necessarius subsp. asymbioticus).